We begin with the raw amino-acid sequence, 33 residues long: Beta-theraphotoxin-Cm1a (33 aa).

3 disulfides stabilise this stretch: Cys-2-Cys-17, Cys-9-Cys-22, and Cys-16-Cys-29. Leu-33 carries the leucine amide modification.

It belongs to the neurotoxin 10 (Hwtx-1) family. 04 (CcoTx1) subfamily. In terms of tissue distribution, expressed by the venom gland.

It localises to the secreted. Its function is as follows. Inhibits many voltage-gated sodium channels and one voltage-gated calcium channel (Cav2.2/CACNA1B (IC(50)=400 nM), Nav1.2/SCN2A (IC(50)=3-70 nM), Nav1.1/SCN1A (IC(50)=523-1060 nM), Nav1.7/SCN9A (IC(50)=129.1-5120 nM), Nav1.4/SCN4A (IC(50)=263-888 nM or &gt;10 uM) and Nav1.5/SCN5A (IC(50)=188-323 nM or &gt;10 uM)). It acts by shifting the voltage dependence of channel activation to more depolarized potentials and by blocking the inward component of the sodium current. It shows moderate affinity for lipid bilayers. On Nav1.7/SCN9A, it has been shown to interact with the S3-S4 loop of domain DII (site 4). Is significantly more potent against Nav1.2/SCN2A than the other Nav channel subtypes. In vivo, this toxin causes general ataxia, lack of response to stimuli, and semiparalysis. After a few minutes, the mice are unable to stand, and breathing is reduced in rhythm and intensity. Symptoms gradually increase with progressive slowing of breathing and flaccid paralysis, death occurred within 10 to 20 minutes post injection. Animals remain totally flaccid, and no symptoms of excitatory neurotoxicity are observed. This is Beta-theraphotoxin-Cm1a from Ceratogyrus marshalli (Straighthorned baboon tarantula).